Reading from the N-terminus, the 238-residue chain is Large ribosomal subunit protein uL2 (238 aa).

Residues 198 to 238 (NHPHGGGSHQSPSFPTTVSRNAPPGRKVGHIAARSTGRRKR) are disordered. Residues 206–217 (HQSPSFPTTVSR) are compositionally biased toward polar residues.

Belongs to the universal ribosomal protein uL2 family. In terms of assembly, part of the 50S ribosomal subunit. Forms a bridge to the 30S subunit in the 70S ribosome.

One of the primary rRNA binding proteins. Required for association of the 30S and 50S subunits to form the 70S ribosome, for tRNA binding and peptide bond formation. It has been suggested to have peptidyltransferase activity; this is somewhat controversial. Makes several contacts with the 16S rRNA in the 70S ribosome. The sequence is that of Large ribosomal subunit protein uL2 from Hyperthermus butylicus (strain DSM 5456 / JCM 9403 / PLM1-5).